Reading from the N-terminus, the 375-residue chain is ATP-sensitive inward rectifier potassium channel 15 (375 aa).

The Cytoplasmic segment spans residues 1–60; sequence MDAIHIGMSSTPLVKHTAGAGLKANRPRVMSKSGHSNVRIDKVDGIYLLYLQDLWTTVID. Residues 61 to 87 traverse the membrane as a helical segment; sequence MKWRYKLTLFAATFVMTWFLFGVIYYA. Topologically, residues 88-113 are extracellular; that stretch reads IAFIHGDLEPGEPISNHTPCIMKVDS. The helical; Pore-forming intramembrane region spans 114 to 130; sequence LTGAFLFSLESQTTIGY. Residues 127–132 carry the Selectivity filter motif; sequence TIGYGV. The Extracellular segment spans residues 131 to 139; that stretch reads GVRSITEEC. A helical transmembrane segment spans residues 140–165; sequence PHAIFLLVAQLVITTLIEIFITGTFL. Over 166 to 375 the chain is Cytoplasmic; that stretch reads AKIARPKKRA…RTLLLQQSNV (210 aa).

Belongs to the inward rectifier-type potassium channel (TC 1.A.2.1) family. KCNJ15 subfamily. As to quaternary structure, can form heteromultimeric channels with Kir5.1/KCNJ16. Interacts with PATJ.

Its subcellular location is the membrane. The protein resides in the cell membrane. The catalysed reaction is K(+)(in) = K(+)(out). Its activity is regulated as follows. Channel activity is regulated by variations of cytosolic pH; reversibly inhibited by acidic pH values. Inhibited by Ba(2+) and Cs(+) in a voltage-dependent manner. Its function is as follows. Inward rectifier potassium channels are characterized by a greater tendency to allow potassium to flow into the cell rather than out of it. Their voltage dependence is regulated by the concentration of extracellular potassium; as external potassium is raised, the voltage range of the channel opening shifts to more positive voltages. The inward rectification is mainly due to the blockage of outward current by internal magnesium. The polypeptide is ATP-sensitive inward rectifier potassium channel 15 (KCNJ15) (Homo sapiens (Human)).